The chain runs to 331 residues: Probable allantoicase (331 aa).

It belongs to the allantoicase family.

It catalyses the reaction allantoate + H2O = (S)-ureidoglycolate + urea. The protein operates within nitrogen metabolism; (S)-allantoin degradation; (S)-ureidoglycolate from allantoate (aminidohydrolase route): step 1/1. The chain is Probable allantoicase from Pseudomonas fluorescens (strain SBW25).